A 318-amino-acid polypeptide reads, in one-letter code: Thymidylate synthase (318 aa).

Residues Arg25 and 180–181 (RR) each bind dUMP. Catalysis depends on Cys200, which acts as the Nucleophile. DUMP contacts are provided by residues 220–223 (RSGD), Asn231, and 261–263 (HIY). Asp223 is a (6R)-5,10-methylene-5,6,7,8-tetrahydrofolate binding site. Ala317 is a (6R)-5,10-methylene-5,6,7,8-tetrahydrofolate binding site.

Belongs to the thymidylate synthase family. Bacterial-type ThyA subfamily. In terms of assembly, homodimer.

It is found in the cytoplasm. It carries out the reaction dUMP + (6R)-5,10-methylene-5,6,7,8-tetrahydrofolate = 7,8-dihydrofolate + dTMP. The protein operates within pyrimidine metabolism; dTTP biosynthesis. Its function is as follows. Catalyzes the reductive methylation of 2'-deoxyuridine-5'-monophosphate (dUMP) to 2'-deoxythymidine-5'-monophosphate (dTMP) while utilizing 5,10-methylenetetrahydrofolate (mTHF) as the methyl donor and reductant in the reaction, yielding dihydrofolate (DHF) as a by-product. This enzymatic reaction provides an intracellular de novo source of dTMP, an essential precursor for DNA biosynthesis. The protein is Thymidylate synthase of Lactobacillus acidophilus (strain ATCC 700396 / NCK56 / N2 / NCFM).